A 458-amino-acid polypeptide reads, in one-letter code: ATP synthase subunit beta (458 aa).

148–155 (GGAGVGKT) contacts ATP.

This sequence belongs to the ATPase alpha/beta chains family. In terms of assembly, F-type ATPases have 2 components, CF(1) - the catalytic core - and CF(0) - the membrane proton channel. CF(1) has five subunits: alpha(3), beta(3), gamma(1), delta(1), epsilon(1). CF(0) has three main subunits: a(1), b(2) and c(9-12). The alpha and beta chains form an alternating ring which encloses part of the gamma chain. CF(1) is attached to CF(0) by a central stalk formed by the gamma and epsilon chains, while a peripheral stalk is formed by the delta and b chains.

It localises to the cell inner membrane. The catalysed reaction is ATP + H2O + 4 H(+)(in) = ADP + phosphate + 5 H(+)(out). In terms of biological role, produces ATP from ADP in the presence of a proton gradient across the membrane. The catalytic sites are hosted primarily by the beta subunits. This Actinobacillus succinogenes (strain ATCC 55618 / DSM 22257 / CCUG 43843 / 130Z) protein is ATP synthase subunit beta.